Consider the following 359-residue polypeptide: Magnesium transporter NIPA2 (359 aa).

The Extracellular segment spans residues 1-9 (MSLGRGKYD). A helical transmembrane segment spans residues 10 to 30 (FYIGLGLAMTSSIFIGGSFIL). At 31–56 (KKKGLLRLARKGSMRAGQGGHAYLKE) the chain is on the cytoplasmic side. Residues 57–77 (WLWWAGLLSMGAGEVANFAAY) form a helical membrane-spanning segment. Residue Ala78 is a topological domain, extracellular. Residues 79 to 99 (FAPATLVTPLGALSVLVSAIL) traverse the membrane as a helical segment. Residues 100–107 (SSYFLNER) are Cytoplasmic-facing. Residues 108 to 128 (LNLHGKIGCLLSILGSTVMVI) traverse the membrane as a helical segment. Residues 129–149 (HAPKEEEIETLNEMSHKLGDP) are Extracellular-facing. Residues 150-170 (GFVVFATFVVIVALIFIFVVG) traverse the membrane as a helical segment. Residues 171–175 (PRHGQ) are Cytoplasmic-facing. Residues 176 to 196 (TNILVYITICSVIGAFSVSCV) traverse the membrane as a helical segment. Topologically, residues 197 to 215 (KGLGIAIKELLAGKPVLQH) are extracellular. The chain crosses the membrane as a helical span at residues 216–236 (PLAWILLFSLVVCVSTQINYL). Residues 237 to 246 (NRALDIFNTS) lie on the Cytoplasmic side of the membrane. A helical membrane pass occupies residues 247–267 (IVTPIYYVFFTTSVLTCSAIL). The Extracellular portion of the chain corresponds to 268-278 (FKEWQDMPVDD). Residues 279-299 (VIGTLSGFFTIIVGIFLLHAF) traverse the membrane as a helical segment. Over 300–359 (KDVSFSLASLPVSFRKDEKAMNGNLSSMYEVLNNNEDDLPCGIEHTGENISRRNGNLPSF) the chain is Cytoplasmic.

Belongs to the NIPA family. Widely expressed. Expressed at high levels in the kidney.

The protein localises to the cell membrane. Its subcellular location is the early endosome. The enzyme catalyses Mg(2+)(in) = Mg(2+)(out). Acts as a selective Mg(2+) transporter. The protein is Magnesium transporter NIPA2 (Nipa2) of Mus musculus (Mouse).